We begin with the raw amino-acid sequence, 136 residues long: MSVSFLRSKFSLKASVFAFFVLFLFCLKIILVLFRNFGKRFKHFLFNQTSLYLLVRLFQKTEIVWNLIANIHFFIKTQIQNLGIRLSRESISNETFQAVKLFHVNNLGLQEQEVINSKLSDYFCFFKYRNLLFVNW.

Residues 14-34 (ASVFAFFVLFLFCLKIILVLF) form a helical membrane-spanning segment.

Its subcellular location is the membrane. This is an uncharacterized protein from Mycoplasma genitalium (strain ATCC 33530 / DSM 19775 / NCTC 10195 / G37) (Mycoplasmoides genitalium).